We begin with the raw amino-acid sequence, 607 residues long: 2-isopropylmalate synthase (607 aa).

Positions 1-10 (MASFSESLSQ) are enriched in polar residues. A disordered region spans residues 1 to 40 (MASFSESLSQDPADAYKSAPSITKPMGPPSPGQPQWNPQR). Positions 75–349 (PLWCAVDLRD…DPQIDFSNID (275 aa)) constitute a Pyruvate carboxyltransferase domain. Mg(2+) contacts are provided by Asp-84, His-288, His-290, and Asn-324. Residues 491-607 (PVQPLERIKQ…VSAVNRAMPR (117 aa)) form a regulatory domain region.

This sequence belongs to the alpha-IPM synthase/homocitrate synthase family. LeuA type 2 subfamily. In terms of assembly, homodimer. Requires Mg(2+) as cofactor.

Its subcellular location is the cytoplasm. It carries out the reaction 3-methyl-2-oxobutanoate + acetyl-CoA + H2O = (2S)-2-isopropylmalate + CoA + H(+). It participates in amino-acid biosynthesis; L-leucine biosynthesis; L-leucine from 3-methyl-2-oxobutanoate: step 1/4. Its function is as follows. Catalyzes the condensation of the acetyl group of acetyl-CoA with 3-methyl-2-oxobutanoate (2-ketoisovalerate) to form 3-carboxy-3-hydroxy-4-methylpentanoate (2-isopropylmalate). In Mycobacterium leprae (strain TN), this protein is 2-isopropylmalate synthase.